Here is a 675-residue protein sequence, read N- to C-terminus: Methionine--tRNA ligase (675 aa).

Residues 12–22 (PYANGPIHLGH) carry the 'HIGH' region motif. Positions 143, 146, 156, and 159 each coordinate Zn(2+). Positions 328–332 (KMSKS) match the 'KMSKS' region motif. Lysine 331 contributes to the ATP binding site. The tRNA-binding domain maps to 574–675 (DFAKVDLRIA…QGAQPGMRVK (102 aa)).

The protein belongs to the class-I aminoacyl-tRNA synthetase family. MetG type 1 subfamily. Homodimer. Zn(2+) serves as cofactor.

Its subcellular location is the cytoplasm. It catalyses the reaction tRNA(Met) + L-methionine + ATP = L-methionyl-tRNA(Met) + AMP + diphosphate. Its function is as follows. Is required not only for elongation of protein synthesis but also for the initiation of all mRNA translation through initiator tRNA(fMet) aminoacylation. The chain is Methionine--tRNA ligase from Alkalilimnicola ehrlichii (strain ATCC BAA-1101 / DSM 17681 / MLHE-1).